Here is a 123-residue protein sequence, read N- to C-terminus: Beta-2-microglobulin (123 aa).

The N-terminal stretch at 1 to 21 (MSRLFLFALLGHLCFLPYLDA) is a signal peptide. The region spanning 29 to 118 (PRVQVYSRYP…STLNEPKVVK (90 aa)) is the Ig-like C1-type domain. Cys49 and Cys104 are disulfide-bonded.

This sequence belongs to the beta-2-microglobulin family. In terms of assembly, heterodimer of an alpha chain and a beta chain. Beta-2-microglobulin is the beta-chain of major histocompatibility complex class I molecules.

The protein localises to the secreted. In terms of biological role, component of the class I major histocompatibility complex (MHC). Involved in the presentation of peptide antigens to the immune system. The protein is Beta-2-microglobulin (B2M) of Monodelphis domestica (Gray short-tailed opossum).